The following is a 146-amino-acid chain: Hemoglobin subunit beta (146 aa).

An N-acetylvaline modification is found at valine 1. The Globin domain occupies 2–146; it reads HLSGGEKSAV…VAHALGHKYH (145 aa). Threonine 12 is subject to Phosphothreonine. N6-acetyllysine is present on lysine 59. Histidine 63 lines the heme b pocket. Residue lysine 82 is modified to N6-acetyllysine. Histidine 92 contributes to the heme b binding site. Residue cysteine 93 is modified to S-nitrosocysteine. Lysine 144 bears the N6-acetyllysine mark.

It belongs to the globin family. As to quaternary structure, heterotetramer of two alpha chains and two beta chains. As to expression, red blood cells.

Involved in oxygen transport from the lung to the various peripheral tissues. This is Hemoglobin subunit beta (HBB) from Ornithorhynchus anatinus (Duckbill platypus).